A 425-amino-acid polypeptide reads, in one-letter code: uncharacterized protein (425 aa).

This is an uncharacterized protein from Salmonella typhimurium (strain LT2 / SGSC1412 / ATCC 700720).